The sequence spans 261 residues: MRRCALLFRLFLISYSCSVYFSACTQASSLKEPDEELPRAEQWDDNGKRILQADDPEHIRTEERGITQNLKPAAESIGKVKAAGKAIKTSVLNSKLMNWVKTALRKGYTAWQLVKMYSLSKGGGVSAMMSGITPLTYKTVYGRTIASKVDVKEKFDTFKTEYFKLFEDLDNVKPSSGMQYWDDELKKLPWTRQFTARLALNKVRKILKSDPSVEKMIDLNVSPLLYMRALEKQGAFARNDVAAINKLKDYVKAFKKHVDLA.

Residues 1 to 18 (MRRCALLFRLFLISYSCS) form the signal peptide. The RxLR-dEER signature appears at 49–64 (RILQADDPEHIRTEER).

Belongs to the RxLR effector family.

Its subcellular location is the secreted. The protein localises to the host cell membrane. Functionally, secreted effector that completely suppresses the host cell death induced by cell death-inducing proteins. The protein is Secreted RxLR effector protein 154 of Plasmopara viticola (Downy mildew of grapevine).